Here is a 349-residue protein sequence, read N- to C-terminus: sn-glycerol-3-phosphate import ATP-binding protein UgpC (349 aa).

An ABC transporter domain is found at 4–235 (ITLKDVHKTY…PATAFVATFI (232 aa)). 37–44 (GPSGCGKS) serves as a coordination point for ATP.

Belongs to the ABC transporter superfamily. sn-glycerol-3-phosphate importer (TC 3.A.1.1.3) family. As to quaternary structure, the complex is composed of two ATP-binding proteins (UgpC), two transmembrane proteins (UgpA and UgpE) and a solute-binding protein (UgpB).

The protein resides in the cell inner membrane. It catalyses the reaction sn-glycerol 3-phosphate(out) + ATP + H2O = sn-glycerol 3-phosphate(in) + ADP + phosphate + H(+). Its function is as follows. Part of the ABC transporter complex UgpBAEC involved in sn-glycerol-3-phosphate (G3P) import. Responsible for energy coupling to the transport system. The chain is sn-glycerol-3-phosphate import ATP-binding protein UgpC from Rhizobium meliloti (strain 1021) (Ensifer meliloti).